The primary structure comprises 251 residues: Hydroxyacylglutathione hydrolase (251 aa).

7 residues coordinate Zn(2+): histidine 55, histidine 57, aspartate 59, histidine 60, histidine 112, aspartate 131, and histidine 169.

This sequence belongs to the metallo-beta-lactamase superfamily. Glyoxalase II family. Monomer. It depends on Zn(2+) as a cofactor.

The catalysed reaction is an S-(2-hydroxyacyl)glutathione + H2O = a 2-hydroxy carboxylate + glutathione + H(+). Its pathway is secondary metabolite metabolism; methylglyoxal degradation; (R)-lactate from methylglyoxal: step 2/2. Its function is as follows. Thiolesterase that catalyzes the hydrolysis of S-D-lactoyl-glutathione to form glutathione and D-lactic acid. The chain is Hydroxyacylglutathione hydrolase from Erythrobacter litoralis (strain HTCC2594).